The chain runs to 81 residues: ATP synthase subunit c (81 aa).

Helical transmembrane passes span Ala6–Ile26 and Leu57–Ala77.

It belongs to the ATPase C chain family. As to quaternary structure, F-type ATPases have 2 components, F(1) - the catalytic core - and F(0) - the membrane proton channel. F(1) has five subunits: alpha(3), beta(3), gamma(1), delta(1), epsilon(1). F(0) has four main subunits: a(1), b(1), b'(1) and c(10-14). The alpha and beta chains form an alternating ring which encloses part of the gamma chain. F(1) is attached to F(0) by a central stalk formed by the gamma and epsilon chains, while a peripheral stalk is formed by the delta, b and b' chains.

The protein localises to the cellular thylakoid membrane. Its function is as follows. F(1)F(0) ATP synthase produces ATP from ADP in the presence of a proton or sodium gradient. F-type ATPases consist of two structural domains, F(1) containing the extramembraneous catalytic core and F(0) containing the membrane proton channel, linked together by a central stalk and a peripheral stalk. During catalysis, ATP synthesis in the catalytic domain of F(1) is coupled via a rotary mechanism of the central stalk subunits to proton translocation. Functionally, key component of the F(0) channel; it plays a direct role in translocation across the membrane. A homomeric c-ring of between 10-14 subunits forms the central stalk rotor element with the F(1) delta and epsilon subunits. In Picosynechococcus sp. (strain ATCC 27264 / PCC 7002 / PR-6) (Agmenellum quadruplicatum), this protein is ATP synthase subunit c.